A 717-amino-acid polypeptide reads, in one-letter code: Ubinuclein-2 (717 aa).

3 disordered regions span residues 114–136 (KDGS…TEDS), 166–308 (LERI…SAKS), and 620–717 (ADSS…NLPS). A compositionally biased stretch (acidic residues) spans 118 to 136 (DGEELDGAPDDDDYDTEDS). Polar residues-rich tracts occupy residues 214–246 (QSAS…NGND) and 285–308 (SSKS…SAKS). A compositionally biased stretch (basic and acidic residues) spans 623–632 (SFERSKQQHE). Residues 634–641 (LKRTSSLS) carry the Nuclear localization signal motif. Residues 653–665 (KTEPALEETHLPA) are compositionally biased toward basic and acidic residues. A compositionally biased stretch (basic residues) spans 675-705 (RQTHLKSKTHKQVQVHPQSKAHKQAQVHPKA). Polar residues predominate over residues 706–717 (KTQTPPDLNLPS).

It belongs to the ubinuclein family. As to quaternary structure, component of the HIRA complex made of UBN1, UBN2, ASF1A, CABIN1 and HIRA. Interacts with HIRA.

The protein localises to the nucleus. The protein resides in the nucleolus. Functionally, may be required for replication-independent chromatin assembly. In Arabidopsis thaliana (Mouse-ear cress), this protein is Ubinuclein-2.